The chain runs to 779 residues: Angiomotin-like protein 2 (779 aa).

Disordered stretches follow at residues 41-215 (GGAG…QYPH) and 263-308 (QYLQ…TSGS). Basic and acidic residues-rich tracts occupy residues 100 to 112 (KGEE…EAKA) and 141 to 152 (RRQDEALRELRH). The required for interaction with CDH5 stretch occupies residues 101–307 (GEELPTYEEA…SAQASSATSG (207 aa)). Tyr-107 bears the Phosphotyrosine; by FGFR1 mark. Low complexity predominate over residues 160–169 (ERLLQLSLER). Over residues 177–193 (HMSSSHSFPQLARNQQG) the composition is skewed to polar residues. The span at 196–213 (LRGPPAEGPESRGPPPQY) shows a compositional bias: pro residues. The interval 220–307 (HETTTAVTDP…SAQASSATSG (88 aa)) is required for interaction with CDH1. The span at 298 to 308 (SAQASSATSGS) shows a compositional bias: low complexity. A coiled-coil region spans residues 308-581 (SAHLAQMEAV…KYLEERAMRQ (274 aa)). Glycyl lysine isopeptide (Lys-Gly) (interchain with G-Cter in ubiquitin) cross-links involve residues Lys-347 and Lys-408. 2 disordered regions span residues 522 to 543 (RAQQ…SPEL) and 679 to 753 (TQGW…GCSS). Positions 530–539 (APGGSSGSGG) are enriched in gly residues. Polar residues-rich tracts occupy residues 680–690 (QGWQGLSSSER) and 725–740 (DGST…TSTC). Phosphoserine occurs at positions 759 and 762. Residues 776–779 (EILI) carry the PDZ-binding motif.

It belongs to the angiomotin family. In terms of assembly, part of a complex composed of AMOTL2, MAGI1 and CDH5, within the complex AMOTL2 acts as a scaffold protein for the interaction of MAGI1 with CDH5. The complex is required for coupling actin fibers to cell junctions in endothelial cells. Within the complex AMOTL2 (via its N-terminus) interacts with CDH5. Interacts (via N-terminus) with MAGI1. Interacts (via N-terminus) with ACTB; the interaction facilitates binding of cell junction complexes to actin fibers in endothelial cells. Interacts with CDH1; the interaction may facilitate binding of radial actin fibers to cell junction complexes. Interacts with SRC. Interacts with YAP1; the interaction is required for ubiquitination of AMOTL2 and localization of YAP1 to tight junctions. Interacts with WWP1; the interaction facilitates WWP1 interaction with the Crumbs complex and subsequent WWP1 translocation to the plasma membrane. WWP1 interaction with the Crumbs complex promotes WWP1 monoubiquitination of AMOTL2 which subsequently activates the Hippo signaling pathway. When ubiquitinated interacts with LATS2 (via UBA domain); the interaction promotes LATS2 phosphorylation of YAP1. Interacts (via PPXY motif) with WWTR1/TAZ (via WW domain); the interaction promotes WWTR1/TAZ localization to the cytoplasm and thereby inhibition of its transcriptional properties. Interacts with PHLDB2; interaction may facilitate PHLDB2 localization to the myotube podosome cortex that surrounds the core. Post-translationally, monoubiquitinated at Lys-347 and Lys-408 by Crumbs complex-bound WWP1. De-ubiquitinated at Lys-347 and Lys-408 by USP9X; the interaction may be promoted by cell contact inhibition. Deubiquitination of AMOTL2 negatively regulates Hippo signaling activation. Phosphorylation at Tyr-107 is necessary for efficient binding to SRC and synergistically functioning with SRC to activate the downstream MAPK pathway.

The protein localises to the recycling endosome. It is found in the cytoplasm. The protein resides in the cell projection. It localises to the podosome. Its subcellular location is the cell junction. Functionally, regulates the translocation of phosphorylated SRC to peripheral cell-matrix adhesion sites. Required for proper architecture of actin filaments. Plays a role in coupling actin fibers to cell junctions in endothelial cells and is therefore required for correct endothelial cell morphology via facilitating transcellular transmission of mechanical force resulting in endothelial cell elongation. Required for the anchoring of radial actin fibers to CDH1 junction complexes at the cell membrane which facilitates organization of radial actin fiber structure and cellular response to contractile forces. This contributes to maintenance of cell area, size, shape, epithelial sheet organization and trophectoderm cell properties that facilitate blastocyst zona hatching. Inhibits the Wnt/beta-catenin signaling pathway, probably by recruiting CTNNB1 to recycling endosomes and hence preventing its translocation to the nucleus. Participates in angiogenesis. Activates the Hippo signaling pathway in response to cell contact inhibition via interaction with and ubiquitination by Crumbs complex-bound WWP1. Ubiquitinated AMOTL2 then interacts with LATS2 which in turn phosphorylates YAP1, excluding it from the nucleus and localizing it to the cytoplasm and tight junctions, therefore ultimately repressing YAP1-driven transcription of target genes. Acts to inhibit WWTR1/TAZ transcriptional coactivator activity via sequestering WWTR1/TAZ in the cytoplasm and at tight junctions. Regulates the size and protein composition of the podosome cortex and core at myofibril neuromuscular junctions. Selectively promotes FGF-induced MAPK activation through SRC. May play a role in the polarity, proliferation and migration of endothelial cells. The chain is Angiomotin-like protein 2 from Homo sapiens (Human).